The primary structure comprises 1091 residues: Self-sufficient cytochrome P450 monooxygenase CYP505E1 (1091 aa).

Cys-433 contributes to the heme binding site. The region spanning 528 to 669 (ICFFYGSNSG…DLEAWEETSL (142 aa)) is the Flavodoxin-like domain. FMN is bound by residues 534–538 (SNSGT) and 613–645 (VFGCGHHDWTQTFYRIPTLIDELMHKAGATRLA). An FAD-binding FR-type domain is found at 707–935 (KDLMEARVTT…RPAKEAFHLP (229 aa)).

This sequence in the N-terminal section; belongs to the cytochrome P450 family. The cofactor is FAD. FMN is required as a cofactor. It depends on heme as a cofactor.

It carries out the reaction 2 oxidized [cytochrome P450] + NADPH = 2 reduced [cytochrome P450] + NADP(+) + H(+). The catalysed reaction is an organic molecule + reduced [NADPH--hemoprotein reductase] + O2 = an alcohol + oxidized [NADPH--hemoprotein reductase] + H2O + H(+). It catalyses the reaction dodecanoate + reduced [NADPH--hemoprotein reductase] + O2 = 5-hydroxydodecanoate + oxidized [NADPH--hemoprotein reductase] + H2O + H(+). The enzyme catalyses tetradecanoate + reduced [NADPH--hemoprotein reductase] + O2 = 7-hydroxytetradecanoate + oxidized [NADPH--hemoprotein reductase] + H2O + H(+). It carries out the reaction dodecan-1-ol + reduced [NADPH--hemoprotein reductase] + O2 = 1,5-dodecanediol + oxidized [NADPH--hemoprotein reductase] + H2O + H(+). The catalysed reaction is dodecan-1-ol + reduced [NADPH--hemoprotein reductase] + O2 = 1,4-dodecanediol + oxidized [NADPH--hemoprotein reductase] + H2O + H(+). It catalyses the reaction dodecan-1-ol + reduced [NADPH--hemoprotein reductase] + O2 = 1,6-dodecanediol + oxidized [NADPH--hemoprotein reductase] + H2O + H(+). Functionally, self-sufficient cytochrome P450 monooxygenase that catalyzes the regioselective in-chain hydroxylation of alkanes, fatty alcohols, and fatty acids at the omega-7 position. Performs hydroxylation of C10-C16 n-alkanes and C12 and C14 fatty alcohols; and thereby enables the one step biocatalytic synthesis of rare alcohols such as 5-dodecanol and 7-tetradecanol. Converts 1-dodecanol into 1,5-dodecanediol as major product with very little sub-terminally hydroxylated products with the 1,4-dodecanediol and 1,6-dodecanediol more abundant. Converts dodecanoic acid to 5-hydroxydodecanoic acid which can be further converted into delta-dodecalactone by lactonization of the 5-hydroxy acid at low pH. Also gives sub-terminal hydroxylation of dodecanoic acid with 9-hydroxydodecanoic acid being the second most abundant product. This Aspergillus niger (strain ATCC MYA-4892 / CBS 513.88 / FGSC A1513) protein is Self-sufficient cytochrome P450 monooxygenase CYP505E1.